Reading from the N-terminus, the 361-residue chain is ETS translocation variant 3-like protein (361 aa).

A DNA-binding region (ETS) is located at residues 39–120; the sequence is IQLWHFILEL…KGKRFTYKFN (82 aa). The interval 178–201 is disordered; it reads LTGQQTPRGPPETSGDKKGSSSSV.

Belongs to the ETS family.

The protein localises to the nucleus. Transcriptional regulator. The sequence is that of ETS translocation variant 3-like protein (ETV3L) from Homo sapiens (Human).